Consider the following 488-residue polypeptide: Arginine biosynthesis bifunctional protein ArgJ, mitochondrial (488 aa).

The substrate site is built by threonine 227, lysine 250, threonine 261, glutamate 340, asparagine 483, and serine 488. Threonine 261 acts as the Nucleophile in catalysis.

It belongs to the ArgJ family. Heterodimer of an alpha and a beta chain. In terms of processing, the alpha and beta chains are autoproteolytically processed from a single precursor protein within the mitochondrion.

Its subcellular location is the mitochondrion matrix. It carries out the reaction N(2)-acetyl-L-ornithine + L-glutamate = N-acetyl-L-glutamate + L-ornithine. The catalysed reaction is L-glutamate + acetyl-CoA = N-acetyl-L-glutamate + CoA + H(+). The protein operates within amino-acid biosynthesis; L-arginine biosynthesis; L-ornithine and N-acetyl-L-glutamate from L-glutamate and N(2)-acetyl-L-ornithine (cyclic): step 1/1. Its pathway is amino-acid biosynthesis; L-arginine biosynthesis; N(2)-acetyl-L-ornithine from L-glutamate: step 1/4. Its function is as follows. Catalyzes two activities which are involved in the cyclic version of arginine biosynthesis: the synthesis of acetylglutamate from glutamate and acetyl-CoA, and of ornithine by transacetylation between acetylornithine and glutamate. The sequence is that of Arginine biosynthesis bifunctional protein ArgJ, mitochondrial from Thalassiosira pseudonana (Marine diatom).